We begin with the raw amino-acid sequence, 857 residues long: Potassium channel AKT1 (857 aa).

Topologically, residues Met1 to Glu61 are cytoplasmic. A helical membrane pass occupies residues Ala62 to Leu82. Residues Arg83–Ser90 are Extracellular-facing. The chain crosses the membrane as a helical span at residues Ile91–Gly111. The Cytoplasmic portion of the chain corresponds to Tyr112–Ser134. Residues Trp135–Gln155 form a helical membrane-spanning segment. Residues Ser156 to Gly158 lie on the Extracellular side of the membrane. The chain crosses the membrane as a helical; Voltage-sensor span at residues Leu159–Glu179. Residues Lys180–Lys193 are Cytoplasmic-facing. A helical membrane pass occupies residues Leu194–Ala214. Residues Arg215–Val241 lie on the Extracellular side of the membrane. Residues Thr242–Pro261 constitute an intramembrane region (pore-forming). Residues Val262 to Lys265 are Extracellular-facing. A helical transmembrane segment spans residues Glu266–Gly286. Topologically, residues Asn287–Ser857 are cytoplasmic. Leu372–Lys493 lines the a nucleoside 3',5'-cyclic phosphate pocket. ANK repeat units follow at residues Lys515–Glu546, Asn550–Cys579, Glu583–Ala612, Asp614–Arg643, Thr647–Lys676, and His680–Val709. One can recognise a KHA domain in the interval Arg790–Ser857.

This sequence belongs to the potassium channel family. Plant (TC 1.A.1.4) subfamily. The potassium channel is probably composed of a homo- or heterotetrameric complex of pore-forming subunits. Possible heteromultimer with AKT2 or KAT3. Part of a K(+)-channel calcium-sensing kinase/phosphatase complex composed by a calcium sensor CBL (CBL1, CBL2, CBL3 or CBL9), a kinase CIPK (CIPK6, CIPK16 or CIPK23), a phosphatase PP2C (AIP1) and a K(+)-channel (AKT1). Interacts directly with AIP1, CBL10, CIPK6, CIPK16 and CIPK23. Post-translationally, phosphorylated by CIPK proteins CIPK6, CIPK16 and CIPK23. The activation by phosphorylation is induced by low K(+) conditions and stimulates K(+) uptake and relocation. Dephosphorylation by AIP1 repressed the transport activity. Preferentially expressed in the peripheral cell layers of root mature including root cortex and root hairs. Detected also, at a lower level, in the mesophyll of the leaves and at restricted sites corresponding to hydathodes and guard cells.

It is found in the cell membrane. Its function is as follows. Highly selective inward-rectifying potassium channel that mediate potassium uptake by plant roots in response to low K(+) conditions, by a calcium-, CBL-, and CIPK-dependent pathway. Positively regulated by phosphorylation by CIPK23. Negatively regulated by a kinase-independent regulatory mechanism involving a competing direct binding of CBL10. Involved in the stomatal regulation by monitoring the turgor pressure in guard cells. Assuming opened or closed conformations in response to the voltage difference across the membrane, the channel is activated by hyperpolarization. May interact with the cytoskeleton or with regulatory proteins. Is essential with POT5/HAK5 for high-affinity potassium uptake in roots during seedling establishment and postgermination growth under low potassium conditions. This chain is Potassium channel AKT1 (AKT1), found in Arabidopsis thaliana (Mouse-ear cress).